Reading from the N-terminus, the 798-residue chain is Copalyl diphosphate synthase 1, chloroplastic (798 aa).

The transit peptide at 1-72 (MASLSTMHLI…SKVAGINRVA (72 aa)) directs the protein to the chloroplast. K251 is a binding site for substrate. Residues D383 and D385 each contribute to the Mg(2+) site. Residues 383–386 (DIDD) carry the DXDD motif motif. K469 serves as a coordination point for substrate.

This sequence belongs to the terpene synthase family. Tpsc subfamily. Mg(2+) serves as cofactor. In terms of tissue distribution, highly expressed in roots, and, at low levels, in stems and leaves.

Its subcellular location is the plastid. It is found in the chloroplast. The catalysed reaction is (2E,6E,10E)-geranylgeranyl diphosphate = (+)-copalyl diphosphate. Its pathway is secondary metabolite biosynthesis; terpenoid biosynthesis. Functionally, involved in the biosynthesis of ent-kaurene diterpenoids natural products such as oridonin, miltiradiene, eriocalyxin B and nezukol, known to exhibit antitumor, anti-inflammatory and antibacterial activities. Catalyzes the conversion of (2E,6E,10E)-geranylgeranyl diphosphate (GGPP) to (+)-copalyl diphosphate ((+)-CPP). The chain is Copalyl diphosphate synthase 1, chloroplastic from Isodon rubescens (Rabdosia rubescens).